Consider the following 483-residue polypeptide: Cobyric acid synthase (483 aa).

The GATase cobBQ-type domain maps to 248–434; the sequence is ALRVVVPVLP…LHGLFEQPSA (187 aa). Cysteine 329 acts as the Nucleophile in catalysis. Residue histidine 426 is part of the active site.

This sequence belongs to the CobB/CobQ family. CobQ subfamily.

Its pathway is cofactor biosynthesis; adenosylcobalamin biosynthesis. Catalyzes amidations at positions B, D, E, and G on adenosylcobyrinic A,C-diamide. NH(2) groups are provided by glutamine, and one molecule of ATP is hydrogenolyzed for each amidation. In Ectopseudomonas mendocina (strain ymp) (Pseudomonas mendocina), this protein is Cobyric acid synthase.